The following is a 434-amino-acid chain: Protein HEAT INTOLERANT 4 (434 aa).

Positions 1-8 (MKKGAKRK) match the Nuclear localization signal 1 motif. Residues 1-15 (MKKGAKRKGVSKAGR) show a composition bias toward basic residues. The disordered stretch occupies residues 1-131 (MKKGAKRKGV…PVPKAKKPRA (131 aa)). A compositionally biased stretch (basic and acidic residues) spans 30 to 53 (ETTKTTQEESQQHEEEVVDEVKEN). Residues 54 to 82 (GEEEEAKGDQEEEEDAKPDSLEEDEENQE) are compositionally biased toward acidic residues. The segment covering 83 to 98 (DEVKAEEVKEEVEKKP) has biased composition (basic and acidic residues). Positions 95-102 (EKKPVARR) match the Nuclear localization signal 2 motif. A compositionally biased stretch (basic residues) spans 99 to 110 (VARRGGKRKRAT). Over residues 111 to 122 (KKDTEIKDEKKP) the composition is skewed to basic and acidic residues. A coiled-coil region spans residues 363-394 (VKEQVRAAKKANREAKDARKKAIEEMSEDTKQ). The Nuclear localization signal 3 motif lies at 370 to 377 (AKKANREA).

The protein localises to the nucleus. The protein resides in the nucleolus. Its function is as follows. Essential protein required for basal thermotolerance, especially during heat-induced chromocentre decondensation, thus regulating transcriptional gene silencing (TGS). This chain is Protein HEAT INTOLERANT 4, found in Arabidopsis thaliana (Mouse-ear cress).